Reading from the N-terminus, the 320-residue chain is HPr kinase/phosphorylase (320 aa).

Active-site residues include H141 and K162. Residue 156 to 163 coordinates ATP; the sequence is GHSGLGKS. Position 163 (S163) interacts with Mg(2+). Residue D180 is the Proton acceptor; for phosphorylation activity. Proton donor; for dephosphorylation activity of the active site. The important for the catalytic mechanism of both phosphorylation and dephosphorylation stretch occupies residues 204–213; the sequence is LEVRGLGILN. Position 205 (E205) interacts with Mg(2+). Residue R248 is part of the active site. The important for the catalytic mechanism of dephosphorylation stretch occupies residues 269-274; it reads PVAVGR.

Belongs to the HPrK/P family. Homohexamer. It depends on Mg(2+) as a cofactor.

The catalysed reaction is [HPr protein]-L-serine + ATP = [HPr protein]-O-phospho-L-serine + ADP + H(+). It catalyses the reaction [HPr protein]-O-phospho-L-serine + phosphate + H(+) = [HPr protein]-L-serine + diphosphate. Catalyzes the ATP- as well as the pyrophosphate-dependent phosphorylation of a specific serine residue in HPr, a phosphocarrier protein of the phosphoenolpyruvate-dependent sugar phosphotransferase system (PTS). HprK/P also catalyzes the pyrophosphate-producing, inorganic phosphate-dependent dephosphorylation (phosphorolysis) of seryl-phosphorylated HPr (P-Ser-HPr). This Neisseria meningitidis serogroup C / serotype 2a (strain ATCC 700532 / DSM 15464 / FAM18) protein is HPr kinase/phosphorylase.